The sequence spans 224 residues: 7-cyano-7-deazaguanine synthase (224 aa).

12–22 (LSGGLDSSTVT) is an ATP binding site. Positions 193, 201, 204, and 207 each coordinate Zn(2+).

This sequence belongs to the QueC family. It depends on Zn(2+) as a cofactor.

The enzyme catalyses 7-carboxy-7-deazaguanine + NH4(+) + ATP = 7-cyano-7-deazaguanine + ADP + phosphate + H2O + H(+). Its pathway is purine metabolism; 7-cyano-7-deazaguanine biosynthesis. Catalyzes the ATP-dependent conversion of 7-carboxy-7-deazaguanine (CDG) to 7-cyano-7-deazaguanine (preQ(0)). The chain is 7-cyano-7-deazaguanine synthase from Prochlorococcus marinus (strain MIT 9301).